A 403-amino-acid polypeptide reads, in one-letter code: Acetate kinase (403 aa).

Asparagine 13 is a binding site for Mg(2+). Lysine 20 contacts ATP. Position 94 (arginine 94) interacts with substrate. The active-site Proton donor/acceptor is aspartate 153. ATP is bound by residues 213–217 (HLGNG), 288–290 (DFR), and 336–340 (GIGEN). Residue glutamate 390 coordinates Mg(2+).

It belongs to the acetokinase family. As to quaternary structure, homodimer. Requires Mg(2+) as cofactor. It depends on Mn(2+) as a cofactor.

The protein resides in the cytoplasm. The catalysed reaction is acetate + ATP = acetyl phosphate + ADP. The protein operates within metabolic intermediate biosynthesis; acetyl-CoA biosynthesis; acetyl-CoA from acetate: step 1/2. In terms of biological role, catalyzes the formation of acetyl phosphate from acetate and ATP. Can also catalyze the reverse reaction. The chain is Acetate kinase from Buchnera aphidicola subsp. Schizaphis graminum (strain Sg).